The following is a 620-amino-acid chain: Cilia- and flagella-associated protein 52 (620 aa).

WD repeat units follow at residues 62 to 106, 109 to 150, 156 to 195, 288 to 327, 330 to 369, 372 to 411, 415 to 454, 459 to 498, 500 to 541, 543 to 582, and 585 to 620; these read GHGN…LIAR, LHKG…AICG, LNVG…RKIW, QLQG…ETLI, CHFE…ELLR, VPNM…LMYT, AHRI…QKLE, EHKS…RNQM, LANT…RELE, SLSG…VTHV, and GHSG…PFAS.

Belongs to the CFAP52 family. As to quaternary structure, microtubule inner protein component of sperm flagellar doublet microtubules. Interacts with BRCA2. Interacts with the CCT chaperonin complex. Interacts with HSP70. Interacts with AK8. Interacts with CFAP45. Interacts with DNAI1. Interacts with IQDC.

It localises to the cytoplasm. It is found in the cytoskeleton. Its subcellular location is the cilium axoneme. The protein localises to the flagellum axoneme. Functionally, microtubule inner protein (MIP) part of the dynein-decorated doublet microtubules (DMTs) in cilia axoneme. Important for proper ciliary and flagellar beating. May act in cooperation with CFAP45 and axonemal dynein subunit DNAH11. May play a role in cell growth and/or survival. In Mus musculus (Mouse), this protein is Cilia- and flagella-associated protein 52.